A 227-amino-acid chain; its full sequence is 6,7-dimethyl-8-ribityllumazine synthase, chloroplastic (227 aa).

The transit peptide at Met1–Ala71 directs the protein to the chloroplast. 5-amino-6-(D-ribitylamino)uracil contacts are provided by residues Phe94, Ser128 to Glu130, and Ala152 to Ile154. Asp157 to Thr158 lines the (2S)-2-hydroxy-3-oxobutyl phosphate pocket. Catalysis depends on His160, which acts as the Proton donor. Phe185 serves as a coordination point for 5-amino-6-(D-ribitylamino)uracil. Arg199 contributes to the (2S)-2-hydroxy-3-oxobutyl phosphate binding site.

It belongs to the DMRL synthase family. Oligomer forming an icosahedral capsid.

It localises to the plastid. Its subcellular location is the chloroplast. It catalyses the reaction (2S)-2-hydroxy-3-oxobutyl phosphate + 5-amino-6-(D-ribitylamino)uracil = 6,7-dimethyl-8-(1-D-ribityl)lumazine + phosphate + 2 H2O + H(+). The protein operates within cofactor biosynthesis; riboflavin biosynthesis; riboflavin from 2-hydroxy-3-oxobutyl phosphate and 5-amino-6-(D-ribitylamino)uracil: step 1/2. Catalyzes the formation of 6,7-dimethyl-8-ribityllumazine by condensation of 5-amino-6-(D-ribitylamino)uracil with 3,4-dihydroxy-2-butanone 4-phosphate. This is the penultimate step in the biosynthesis of riboflavin. In Arabidopsis thaliana (Mouse-ear cress), this protein is 6,7-dimethyl-8-ribityllumazine synthase, chloroplastic.